The primary structure comprises 1020 residues: FERM domain-containing protein 4A (1020 aa).

The 303-residue stretch at 5–307 (RRCQVHLLDD…SQHQFYLDRK (303 aa)) folds into the FERM domain. The necessary for interaction with CYTH1 stretch occupies residues 343–405 (KGKIISGSSG…RLCLREAELT (63 aa)). Positions 351-367 (SGSLLSSGSQESDSSQS) are enriched in low complexity. Residues 351 to 371 (SGSLLSSGSQESDSSQSAKKD) are disordered. Residues 367 to 401 (SAKKDMLAALKSRQEALEETLRQRLEELKRLCLRE) are a coiled coil. Phosphoserine is present on Ser515. A disordered region spans residues 538-665 (DEDSQVTSTI…MPSTPDLRVR (128 aa)). Residues 542–551 (QVTSTISPLQ) show a composition bias toward polar residues. The segment covering 556–572 (GLPPRPPSSHNRPPPPQ) has biased composition (pro residues). A necessary for tight junction and adherens junction localization; Requires for interaction with PARD3 region spans residues 565 to 920 (HNRPPPPQSL…QWYQRSTASH (356 aa)). Phosphoserine occurs at positions 590 and 601. Basic residues predominate over residues 609-624 (VKKRSSHGHSSSHKRF). Positions 626-658 (STGSCTEAGVSSSLQNSPIRSLPHWNSQSSMPS) are enriched in polar residues. Phosphoserine is present on residues Ser666 and Ser696. 2 disordered regions span residues 698–741 (ESQG…HSSS) and 757–810 (AEDS…QSQP). Low complexity predominate over residues 773-796 (RAAGALGSASSGSMPNLAARSGAA). Ser785, Ser854, and Ser882 each carry phosphoserine. 2 disordered regions span residues 862 to 949 (KESW…STFV) and 961 to 1020 (CKAT…STDE). The segment covering 893–910 (DGAHDKGSGRAAVSDELR) has biased composition (basic and acidic residues). Positions 927-947 (SHTSSTSSDSGSQYSTSSQST) are enriched in low complexity. Composition is skewed to polar residues over residues 967–981 (ALPQ…SSEI), 994–1004 (TWQTGEATENS), and 1011–1020 (ESPTHQSTDE).

In terms of assembly, interacts (via coiled-coil domain) with CYTH1 (via coiled-coil domain). Interacts with PARD3 (via coiled-coil domain). Found in a complex with PARD3, CYTH1 and FRMD4A. Interacts with CYTH2. Interacts with CYTH3.

The protein localises to the cytoplasm. It localises to the cytoskeleton. It is found in the cell junction. The protein resides in the adherens junction. Its subcellular location is the tight junction. Its function is as follows. Scaffolding protein that regulates epithelial cell polarity by connecting ARF6 activation with the PAR3 complex. Plays a redundant role with FRMD4B in epithelial polarization. May regulate MAPT secretion by activating ARF6-signaling. This chain is FERM domain-containing protein 4A (Frmd4a), found in Mus musculus (Mouse).